A 437-amino-acid polypeptide reads, in one-letter code: 3-ketoacyl-CoA thiolase (437 aa).

The active-site Acyl-thioester intermediate is Cys-99. Catalysis depends on proton acceptor residues His-392 and Cys-422.

It belongs to the thiolase-like superfamily. Thiolase family. Heterotetramer of two alpha chains (FadJ) and two beta chains (FadI).

It localises to the cytoplasm. It catalyses the reaction an acyl-CoA + acetyl-CoA = a 3-oxoacyl-CoA + CoA. It participates in lipid metabolism; fatty acid beta-oxidation. Catalyzes the final step of fatty acid oxidation in which acetyl-CoA is released and the CoA ester of a fatty acid two carbons shorter is formed. The sequence is that of 3-ketoacyl-CoA thiolase from Erwinia tasmaniensis (strain DSM 17950 / CFBP 7177 / CIP 109463 / NCPPB 4357 / Et1/99).